A 267-amino-acid polypeptide reads, in one-letter code: Sulfate transporter CysZ (267 aa).

The next 4 membrane-spanning stretches (helical) occupy residues F29–I49, I73–L93, I149–V169, and G212–V232.

Belongs to the CysZ family.

It is found in the cell inner membrane. Its function is as follows. High affinity, high specificity proton-dependent sulfate transporter, which mediates sulfate uptake. Provides the sulfur source for the cysteine synthesis pathway. The polypeptide is Sulfate transporter CysZ (Pasteurella multocida (strain Pm70)).